The sequence spans 875 residues: F-box only protein 41 (875 aa).

Disordered stretches follow at residues 85–110 (ESTS…HHHH), 165–194 (SSAC…PSPA), and 347–542 (SSSC…PSRS). Residues 170-182 (TPPPGPGPGPCPG) are compositionally biased toward pro residues. Residues 183–194 (PASASPASPSPA) show a composition bias toward low complexity. Positions 209–351 (ALEKLEVDRR…QLQVISSSCG (143 aa)) form a coiled coil. The segment covering 347–356 (SSSCGSTPSA) has biased composition (polar residues). Residues 359 to 368 (GRGGGGGGAG) are compositionally biased toward gly residues. Arginine 360 bears the Omega-N-methylarginine mark. The span at 395–416 (HGSSPSTGASSRVPAASQSSGC) shows a compositional bias: polar residues. A Phosphoserine modification is found at serine 478. A Phosphothreonine modification is found at threonine 479. In terms of domain architecture, F-box spans 496-540 (SEAEGPLDAPRPGPAMAGPLSSCRLSARPEGGSGRGRRAERVSPS). Residue serine 762 is modified to Phosphoserine.

As to quaternary structure, directly interacts with SKP1 and CUL1.

Its function is as follows. Substrate-recognition component of the SCF (SKP1-CUL1-F-box protein)-type E3 ubiquitin ligase complex. In Homo sapiens (Human), this protein is F-box only protein 41 (FBXO41).